A 277-amino-acid polypeptide reads, in one-letter code: MNNLLLSINWNPNPELFNLFGISIRYYGLLWAIGIFFAYIVVHYQYRDKKIDEKKFEPLFFYCFFGILIGARLGHCLFYDPGYYLNHFWEMILPVKFLPGGGWKFTGYEGLASHGGTLGLIISLWLYCRKTKMNYMDVVDMIAVATPITACFIRLANLMNSEIIGKVTDVSWAFVFERVDMQPRHPAQLYEAIAYFILFLVMMFLYKNYSKKLHRGFFFGLCLTAIFTFRFFVEFLKENQVDFENSMALNMGQWLSIPFVIIGIYFMFFYGKKKSVK.

4 helical membrane-spanning segments follow: residues 22–42, 59–79, 107–127, and 133–153; these read ISIRYYGLLWAIGIFFAYIVV, LFFYCFFGILIGARLGHCLFY, GYEGLASHGGTLGLIISLWLY, and MNYMDVVDMIAVATPITACFI. Residue Arg154 participates in a 1,2-diacyl-sn-glycero-3-phospho-(1'-sn-glycerol) binding. A run of 3 helical transmembrane segments spans residues 186-206, 216-236, and 251-271; these read PAQLYEAIAYFILFLVMMFLY, GFFFGLCLTAIFTFRFFVEFL, and MGQWLSIPFVIIGIYFMFFYG.

The protein belongs to the Lgt family.

The protein resides in the cell inner membrane. It carries out the reaction L-cysteinyl-[prolipoprotein] + a 1,2-diacyl-sn-glycero-3-phospho-(1'-sn-glycerol) = an S-1,2-diacyl-sn-glyceryl-L-cysteinyl-[prolipoprotein] + sn-glycerol 1-phosphate + H(+). It participates in protein modification; lipoprotein biosynthesis (diacylglyceryl transfer). Functionally, catalyzes the transfer of the diacylglyceryl group from phosphatidylglycerol to the sulfhydryl group of the N-terminal cysteine of a prolipoprotein, the first step in the formation of mature lipoproteins. In Bacteroides fragilis (strain ATCC 25285 / DSM 2151 / CCUG 4856 / JCM 11019 / LMG 10263 / NCTC 9343 / Onslow / VPI 2553 / EN-2), this protein is Phosphatidylglycerol--prolipoprotein diacylglyceryl transferase.